Here is a 291-residue protein sequence, read N- to C-terminus: N-acetylmannosamine kinase (291 aa).

Residues A5 to K12 and G132 to S139 each bind ATP. Zn(2+) is bound by residues H156, C166, C168, and C173.

Belongs to the ROK (NagC/XylR) family. NanK subfamily. Homodimer.

It carries out the reaction an N-acyl-D-mannosamine + ATP = an N-acyl-D-mannosamine 6-phosphate + ADP + H(+). Its pathway is amino-sugar metabolism; N-acetylneuraminate degradation; D-fructose 6-phosphate from N-acetylneuraminate: step 2/5. Catalyzes the phosphorylation of N-acetylmannosamine (ManNAc) to ManNAc-6-P. The chain is N-acetylmannosamine kinase from Escherichia coli (strain SE11).